Here is a 93-residue protein sequence, read N- to C-terminus: MSRSIKKPPFCAPHVLRLVNKAIAQNKLNSIINIHSRSSVILNKFIGLTFGVYNGKTYVPVKVNDNMVGRKFGEFSPTRRYTGHVGDKKVSRK.

It belongs to the universal ribosomal protein uS19 family.

Its function is as follows. Protein S19 forms a complex with S13 that binds strongly to the 16S ribosomal RNA. The protein is Small ribosomal subunit protein uS19 of Ehrlichia chaffeensis (strain ATCC CRL-10679 / Arkansas).